Here is a 589-residue protein sequence, read N- to C-terminus: Isocitrate dehydrogenase kinase/phosphatase (589 aa).

ATP contacts are provided by residues 322–328 (APGIRGL) and Lys343. The active site involves Asp378.

The protein belongs to the AceK family.

It is found in the cytoplasm. It catalyses the reaction L-seryl-[isocitrate dehydrogenase] + ATP = O-phospho-L-seryl-[isocitrate dehydrogenase] + ADP + H(+). Bifunctional enzyme which can phosphorylate or dephosphorylate isocitrate dehydrogenase (IDH) on a specific serine residue. This is a regulatory mechanism which enables bacteria to bypass the Krebs cycle via the glyoxylate shunt in response to the source of carbon. When bacteria are grown on glucose, IDH is fully active and unphosphorylated, but when grown on acetate or ethanol, the activity of IDH declines drastically concomitant with its phosphorylation. This Azoarcus sp. (strain BH72) protein is Isocitrate dehydrogenase kinase/phosphatase.